The chain runs to 135 residues: Ribosome-binding factor A (135 aa).

It belongs to the RbfA family. In terms of assembly, monomer. Binds 30S ribosomal subunits, but not 50S ribosomal subunits or 70S ribosomes.

Its subcellular location is the cytoplasm. Functionally, one of several proteins that assist in the late maturation steps of the functional core of the 30S ribosomal subunit. Associates with free 30S ribosomal subunits (but not with 30S subunits that are part of 70S ribosomes or polysomes). Required for efficient processing of 16S rRNA. May interact with the 5'-terminal helix region of 16S rRNA. This chain is Ribosome-binding factor A, found in Methylobacterium nodulans (strain LMG 21967 / CNCM I-2342 / ORS 2060).